The following is a 763-amino-acid chain: Glycerophosphodiester phosphodiesterase GDPDL1 (763 aa).

An N-terminal signal peptide occupies residues 1–35; the sequence is MNSRPSNPTKLVIRSSTLLFCGVVLIHLFAAQIDA. The Extracellular segment spans residues 36–744; it reads QRSTSRWQTL…STIAQAPSGQ (709 aa). The GP-PDE 1 domain occupies 50–350; sequence PLVIARGGFS…DFPITASAAV (301 aa). Asparagine 105, asparagine 192, asparagine 248, asparagine 257, asparagine 315, asparagine 359, asparagine 430, asparagine 534, asparagine 547, and asparagine 654 each carry an N-linked (GlcNAc...) asparagine glycan. In terms of domain architecture, GP-PDE 2 spans 366 to 668; the sequence is FLVISKDGAS…EFPFTAARYK (303 aa). A helical transmembrane segment spans residues 745–762; the sequence is TRLKLSLLLSVFFLSLLL. Leucine 763 is a topological domain (cytoplasmic).

It belongs to the glycerophosphoryl diester phosphodiesterase family. Ca(2+) serves as cofactor. Expressed in rosette and cauline leaves, stems, flowers and siliques.

It localises to the cell membrane. The enzyme catalyses a sn-glycero-3-phosphodiester + H2O = an alcohol + sn-glycerol 3-phosphate + H(+). Hydrolyzes glycerolphosphoglycerol, glycerophosphocholine and glycerophosphoethanolamine in vitro. The chain is Glycerophosphodiester phosphodiesterase GDPDL1 from Arabidopsis thaliana (Mouse-ear cress).